The primary structure comprises 473 residues: Photosystem II CP43 reaction center protein (473 aa).

Positions 1–14 (MKTLYSLRRSYPVE) are excised as a propeptide. Thr15 carries the N-acetylthreonine modification. Thr15 is subject to Phosphothreonine. Helical transmembrane passes span 69 to 93 (LFEV…PHLA), 134 to 155 (LIGP…KDRN), 178 to 200 (KALY…RKIT), 255 to 275 (KPFA…LSYS), and 291 to 312 (WFNN…ASQA). Glu367 is a binding site for [CaMn4O5] cluster. Residues 447-471 (RARAAAAGFEKGIDRDFEPVLSMTP) traverse the membrane as a helical segment.

It belongs to the PsbB/PsbC family. PsbC subfamily. In terms of assembly, PSII is composed of 1 copy each of membrane proteins PsbA, PsbB, PsbC, PsbD, PsbE, PsbF, PsbH, PsbI, PsbJ, PsbK, PsbL, PsbM, PsbT, PsbX, PsbY, PsbZ, Psb30/Ycf12, at least 3 peripheral proteins of the oxygen-evolving complex and a large number of cofactors. It forms dimeric complexes. Binds multiple chlorophylls and provides some of the ligands for the Ca-4Mn-5O cluster of the oxygen-evolving complex. It may also provide a ligand for a Cl- that is required for oxygen evolution. PSII binds additional chlorophylls, carotenoids and specific lipids. serves as cofactor.

The protein localises to the plastid. Its subcellular location is the chloroplast thylakoid membrane. Its function is as follows. One of the components of the core complex of photosystem II (PSII). It binds chlorophyll and helps catalyze the primary light-induced photochemical processes of PSII. PSII is a light-driven water:plastoquinone oxidoreductase, using light energy to abstract electrons from H(2)O, generating O(2) and a proton gradient subsequently used for ATP formation. This chain is Photosystem II CP43 reaction center protein, found in Pinus koraiensis (Korean pine).